The primary structure comprises 429 residues: Serine hydroxymethyltransferase 1 (429 aa).

Residues Leu125 and 129-131 (GHL) contribute to the (6S)-5,6,7,8-tetrahydrofolate site. The residue at position 234 (Lys234) is an N6-(pyridoxal phosphate)lysine.

The protein belongs to the SHMT family. In terms of assembly, homodimer. Pyridoxal 5'-phosphate is required as a cofactor.

The protein resides in the cytoplasm. The enzyme catalyses (6R)-5,10-methylene-5,6,7,8-tetrahydrofolate + glycine + H2O = (6S)-5,6,7,8-tetrahydrofolate + L-serine. It participates in one-carbon metabolism; tetrahydrofolate interconversion. Its pathway is amino-acid biosynthesis; glycine biosynthesis; glycine from L-serine: step 1/1. Its function is as follows. Catalyzes the reversible interconversion of serine and glycine with tetrahydrofolate (THF) serving as the one-carbon carrier. This reaction serves as the major source of one-carbon groups required for the biosynthesis of purines, thymidylate, methionine, and other important biomolecules. Also exhibits THF-independent aldolase activity toward beta-hydroxyamino acids, producing glycine and aldehydes, via a retro-aldol mechanism. The protein is Serine hydroxymethyltransferase 1 of Agrobacterium fabrum (strain C58 / ATCC 33970) (Agrobacterium tumefaciens (strain C58)).